Reading from the N-terminus, the 1820-residue chain is MQWTAASCDQHDQHDPPAVNRNSIEQRTPANNCEVDPMDATGSTKHPHLPKQREADRPVSGSGGGSSSLTLSGAVTTSMEVTVSTTTTTTIIESSSSTNTTLEKNSPSPAGGSCSSGSGSLSPAYLQHHLQHHGSPLHHLQVHHHTAPPSPLAAVRSAQMGSSVANGAGPAAACLAVCCSPGSSHHHLGHVGHLATGHPLPHQLPHQLPHPSLYPLMAAAQLGYAGSSGPSSLVNSPALGRRKRYTSNSSNCSSQFNNNYAGLDVDSLDDMLRKLTELEQRVIEAEERAEEAEDKVRAMEQRLSEWPKPPPQQAQHPHSHSHPHQPIPSHPQEQQAKNHCSPSHQASGGATAGAAGSGLPPTQETEKTITSLEIQVEEQRQLRLHDARQIEAKAAKIKEWVNNKLRDLEEQNQLLREQNVKCNQQLELLKNHIANQSQRHSIVGPVRNSLSLDVQDFTGSGSNPEHRRRSESLDPQEIIGRPLTSSYPHHQHRRNLSMEPQELERNLVAAVDGLTLAPLSSISNKAPGGVPTESGVVTRPDSSDTDTAHDYAEIYTPSCEKLPAWMKNNPALMASGGNSSTTTTTTSELGVPRPPTPPLHRFPSWEAKIYQVANDGLAGAGTGTSTAESTASQEPDIQDGMGTNLSNGRRHGHGHGSGTGIGTGDGHGTLGSTPGTPLPPSRQQQTASGGFCDISVPVYATVKGRASQIRSMPFTGDSSDDSSDGEDHAVMLTHHSHNSSSTDNTETSTSGSASSPSKSLKTSSSLSPAKRSGSESPKNAKARVHIQSRTSTTPSSRINQHLQPSQHQHHTLSNQNHGHQLGAYTVTPSSGQLSLPRYHANALQPGSLPSPLQHMRGTVISDLSFESGLSDDYALPPDAVSESTCMDASMPSLLMRQSYVDSPSKKIESLEKMGHLAKLGGKLKTWRKRWFVLKNGSLNYWKSQHDVQRKPQGQIQLDEVCRINRAEGASTFEIDTGKKVYYLTADSHATMDDWIRVLQNVQRRNATKLLLSRDDQKPTVQGWVTKVKNGHPKKCWCVLLGKMFLYFKAPAETNPLGQINMRDARVEEVEHVSDSDSEEREDAAQDQARLTVAIYPAHQGPTYLILSGKPERDNWLYHLTVVSGGGPSAGTQYEQLVQKLMETDGDPNCVLWRHPILLHTKDTITAPLSSMHTETMQPEAIKLFKSIQLFMSVAVNQPGIDYHVVLAQNALQHALDMPELQTEMICILIKQTSRHLGQKLSVGVQVNKKLGKQTRQLLLCATQSLFTCDTQQAGHAQANGSSPTSIQAPSATPIIDCKSNPPVYSFVQGWQLLALAVSLFVPRSSRLLWYLKLHLSRNADTKTETGKYAAYCERALERTLKNGGRETKPSRMEVLSILLKNPYHHSLPHAIPVHMMNSTYQVVSFDGSTTIEEFQATLAHELGTRDATNGFCLFSDDPIEKDLEHYLEPLAKLCDVISKWETALREKGSGKFENSRVIQLSYKNRLYWKHTIKCETDKERLLLCYQTNSQIVQGRFPLSRELALELASLMSQIDMGDYSLEKSRDVGVGLKGLDKFYPYRYRDALGAEQLKDVQELLVSKWMLLKGRSTLDCVRIYLTCCRKWPYFGACLFQAKPRQSPESNTASGATPVAWLAVAEDALNVLELSTMAPVARYPYSSVMTFGGCQDDFMLVVSHDDGGGGEQKLLFAMSKPKILEITLLIADYMNALGHTVPGTPQMNSLTRNGSHRSLRTSQRPNLGGGSAVATGFSTNATTTAHNTLNSHATHTLNSNHSHTLSSSHHAGGGSQPGTLSSGHHQHHHIQQHHQPDILKSTPDHQRIK.

Disordered regions lie at residues 1-73 (MQWT…TLSG), 86-158 (TTTT…VRSA), 226-260 (GSSG…NNNY), 286-366 (EERA…QETE), 453-497 (DVQD…RNLS), 519-548 (LSSI…TDTA), 577-597 (GNSS…PPTP), 619-689 (GAGT…TASG), and 735-830 (HSHN…TPSS). Over residues 20–31 (NRNSIEQRTPAN) the composition is skewed to polar residues. Low complexity predominate over residues 86–128 (TTTTTIIESSSSTNTTLEKNSPSPAGGSCSSGSGSLSPAYLQH). Residues 129-146 (HLQHHGSPLHHLQVHHHT) show a composition bias toward basic residues. Low complexity predominate over residues 247–259 (SNSSNCSSQFNNN). Positions 265–308 (VDSLDDMLRKLTELEQRVIEAEERAEEAEDKVRAMEQRLSEWPK) form a coiled coil. A compositionally biased stretch (basic and acidic residues) spans 294 to 305 (DKVRAMEQRLSE). Residues 346 to 358 (ASGGATAGAAGSG) show a composition bias toward low complexity. Residues 362-438 (TQETEKTITS…LKNHIANQSQ (77 aa)) are a coiled coil. Residues 453-463 (DVQDFTGSGSN) show a composition bias toward polar residues. Residues serine 542 and serine 543 each carry the phosphoserine modification. Over residues 623-632 (GTSTAESTAS) the composition is skewed to low complexity. The span at 655 to 669 (HGSGTGIGTGDGHGT) shows a compositional bias: gly residues. Low complexity predominate over residues 738–769 (NSSSTDNTETSTSGSASSPSKSLKTSSSLSPA). The segment covering 787–818 (QSRTSTTPSSRINQHLQPSQHQHHTLSNQNHG) has biased composition (polar residues). PH domains follow at residues 909-1003 (SLEK…NVQR) and 1017-1124 (KPTV…VVSG). Residues serine 1073, serine 1075, and serine 1077 each carry the phosphoserine modification. Residues 1159 to 1378 (HTKDTITAPL…PSRMEVLSIL (220 aa)) form the MyTH4 domain. One can recognise an FERM domain in the interval 1389 to 1712 (HAIPVHMMNS…DYMNALGHTV (324 aa)). Disordered stretches follow at residues 1713–1748 (PGTP…ATGF) and 1764–1820 (ATHT…QRIK). Polar residues predominate over residues 1714 to 1724 (GTPQMNSLTRN). Positions 1764-1781 (ATHTLNSNHSHTLSSSHH) are enriched in low complexity. Residues 1805–1820 (HQPDILKSTPDHQRIK) show a composition bias toward basic and acidic residues.

This is an uncharacterized protein from Drosophila melanogaster (Fruit fly).